The primary structure comprises 272 residues: Sordarin/hypoxysordarin biosynthesis cluster protein P (272 aa).

2 N-linked (GlcNAc...) asparagine glycosylation sites follow: Asn6 and Asn23. A run of 2 helical transmembrane segments spans residues 31–51 (FLAS…LLFL) and 67–87 (AYHM…VDLA). N-linked (GlcNAc...) asparagine glycosylation is present at Asn208.

It localises to the membrane. Its pathway is antibiotic biosynthesis. Functionally, part of the gene cluster that mediates the biosynthesis of sordarin and hypoxysordarin, glycoside antibiotics with a unique tetracyclic diterpene aglycone structure. First, the geranylgeranyl diphosphate synthase sdnC constructs GGDP from farnesyl diphosphate and isopentenyl diphosphate. The diterpene cyclase sdnA then catalyzes the cyclization of GGDP to afford cycloaraneosene. Cycloaraneosene is then hydroxylated four times by the putative cytochrome P450 monooxygenases sdnB, sdnE, sdnF and sdnH to give a hydroxylated cycloaraneosene derivative such as cycloaraneosene-8,9,13,19-tetraol. Although the order of the hydroxylations is unclear, at least C8, C9 and C13 of the cycloaraneosene skeleton are hydroxylated before the sordaricin formation. Dehydration of the 13-hydroxy group of the hydroxylated cycloaraneosene derivative might be catalyzed by an unassigned hypothetical protein such as sdnG and sdnP to construct the cyclopentadiene moiety. The FAD-dependent oxidoreductase sdnN is proposed to catalyze the oxidation at C9 of the hydroxylated cycloaraneosene derivative and also catalyze the Baeyer-Villiger oxidation to give the lactone intermediate. The presumed lactone intermediate would be hydrolyzed to give an acrolein moiety and a carboxylate moiety. Then, [4+2]cycloaddition would occur between the acrolein moiety and the cyclopentadiene moiety to give sordaricin. SdnN might also be involved in the [4+2]cycloaddition after the hypothesized oxidation to accommodate the oxidized product and prompt the [4+2]cycloaddition. GDP-6-deoxy-D-altrose may be biosynthesized from GDP-D-mannose by the putative GDP-mannose-4,6-dehydratase sdnI and the short-chain dehydrogenase sdnK. The glycosyltransferase sdnJ catalyzes the attachment of 6-deoxy-D-altrose onto the 19-hydroxy group of sordaricin to give 4'-O-demethylsordarin. The methyltransferase sdnD would complete the biosynthesis of sordarin. Sordarin can be further modified into hypoxysordarin. The unique acyl chain at the 3'-hydroxy group of hypoxysordarin would be constructed by an iterative type I PKS sdnO and the trans-acting polyketide methyltransferase sdnL. SdnL would be responsible for the introduction of an alpha-methyl group of the polyketide chain. Alternatively, the beta-lactamase-like protein sdnR might be responsible for the cleavage and transfer of the polyketide chain from the PKS sdnO to sordarin. Two putative cytochrome P450 monooxygenases, sdnQ and sdnT, might catalyze the epoxidations of the polyketide chain to complete the biosynthesis of hypoxysordarin. Transcriptional regulators sdnM and sdnS are presumably encoded for the transcriptional regulation of the expression of the sdn gene cluster. The protein is Sordarin/hypoxysordarin biosynthesis cluster protein P of Sordaria araneosa (Pleurage araneosa).